Consider the following 110-residue polypeptide: UPF0367 protein Syncc9605_2376 (110 aa).

It belongs to the UPF0367 family.

The chain is UPF0367 protein Syncc9605_2376 from Synechococcus sp. (strain CC9605).